The primary structure comprises 135 residues: Large ribosomal subunit protein uL16c (135 aa).

Belongs to the universal ribosomal protein uL16 family. As to quaternary structure, part of the 50S ribosomal subunit.

The protein resides in the plastid. It localises to the chloroplast. This chain is Large ribosomal subunit protein uL16c, found in Stigeoclonium helveticum (Green alga).